The primary structure comprises 573 residues: Methionine--tRNA ligase (573 aa).

Residues 11 to 21 (PYINGIKHLGN) carry the 'HIGH' region motif. Zn(2+)-binding residues include cysteine 143, cysteine 146, cysteine 156, and cysteine 159. Residues 346–350 (QFSTS) carry the 'KMSKS' region motif. Threonine 349 contributes to the ATP binding site.

Belongs to the class-I aminoacyl-tRNA synthetase family. MetG type 1 subfamily. As to quaternary structure, monomer. Zn(2+) is required as a cofactor.

The protein localises to the cytoplasm. The enzyme catalyses tRNA(Met) + L-methionine + ATP = L-methionyl-tRNA(Met) + AMP + diphosphate. In terms of biological role, is required not only for elongation of protein synthesis but also for the initiation of all mRNA translation through initiator tRNA(fMet) aminoacylation. The polypeptide is Methionine--tRNA ligase (Ruegeria sp. (strain TM1040) (Silicibacter sp.)).